Here is a 531-residue protein sequence, read N- to C-terminus: Probable bifunctional methylthioribulose-1-phosphate dehydratase/enolase-phosphatase E1 2 (531 aa).

Residues 1–248 are methylthioribulose-1-phosphate dehydratase; that stretch reads MGVPSEGAVG…AIKLHQLGLD (248 aa). Residue C120 participates in substrate binding. Residues H138 and H140 each coordinate Zn(2+). The active-site Proton donor/acceptor; for methylthioribulose-1-phosphate dehydratase activity is the E163. A Zn(2+)-binding site is contributed by H213. Residues 292-531 are enolase-phosphatase E1; it reads ILLDIEGTTT…FRTIETFLEI (240 aa). Residues D295 and E297 each contribute to the Mg(2+) site. Residues 430–431 and K464 contribute to the substrate site; that span reads SS. D490 contributes to the Mg(2+) binding site.

It in the N-terminal section; belongs to the aldolase class II family. MtnB subfamily. This sequence in the C-terminal section; belongs to the HAD-like hydrolase superfamily. MasA/MtnC family. Zn(2+) serves as cofactor. It depends on Mg(2+) as a cofactor.

The catalysed reaction is 5-(methylsulfanyl)-D-ribulose 1-phosphate = 5-methylsulfanyl-2,3-dioxopentyl phosphate + H2O. It carries out the reaction 5-methylsulfanyl-2,3-dioxopentyl phosphate + H2O = 1,2-dihydroxy-5-(methylsulfanyl)pent-1-en-3-one + phosphate. The protein operates within amino-acid biosynthesis; L-methionine biosynthesis via salvage pathway; L-methionine from S-methyl-5-thio-alpha-D-ribose 1-phosphate: step 2/6. It participates in amino-acid biosynthesis; L-methionine biosynthesis via salvage pathway; L-methionine from S-methyl-5-thio-alpha-D-ribose 1-phosphate: step 3/6. Its pathway is amino-acid biosynthesis; L-methionine biosynthesis via salvage pathway; L-methionine from S-methyl-5-thio-alpha-D-ribose 1-phosphate: step 4/6. The protein is Probable bifunctional methylthioribulose-1-phosphate dehydratase/enolase-phosphatase E1 2 of Vitis vinifera (Grape).